The sequence spans 149 residues: D-aminoacyl-tRNA deacylase (149 aa).

A Gly-cisPro motif, important for rejection of L-amino acids motif is present at residues 137–138 (GP).

The protein belongs to the DTD family. As to quaternary structure, homodimer.

It is found in the cytoplasm. The catalysed reaction is glycyl-tRNA(Ala) + H2O = tRNA(Ala) + glycine + H(+). The enzyme catalyses a D-aminoacyl-tRNA + H2O = a tRNA + a D-alpha-amino acid + H(+). Its function is as follows. An aminoacyl-tRNA editing enzyme that deacylates mischarged D-aminoacyl-tRNAs. Also deacylates mischarged glycyl-tRNA(Ala), protecting cells against glycine mischarging by AlaRS. Acts via tRNA-based rather than protein-based catalysis; rejects L-amino acids rather than detecting D-amino acids in the active site. By recycling D-aminoacyl-tRNA to D-amino acids and free tRNA molecules, this enzyme counteracts the toxicity associated with the formation of D-aminoacyl-tRNA entities in vivo and helps enforce protein L-homochirality. This is D-aminoacyl-tRNA deacylase from Clostridium botulinum (strain ATCC 19397 / Type A).